The sequence spans 683 residues: Elongation factor G 2 (683 aa).

Positions 4–279 (QQMRNIGIMA…AVVEYLPAPQ (276 aa)) constitute a tr-type G domain. GTP-binding positions include 13–20 (AHVDAGKT), 77–81 (DTPGH), and 131–134 (NKMD).

Belongs to the TRAFAC class translation factor GTPase superfamily. Classic translation factor GTPase family. EF-G/EF-2 subfamily.

Its subcellular location is the cytoplasm. Its function is as follows. Catalyzes the GTP-dependent ribosomal translocation step during translation elongation. During this step, the ribosome changes from the pre-translocational (PRE) to the post-translocational (POST) state as the newly formed A-site-bound peptidyl-tRNA and P-site-bound deacylated tRNA move to the P and E sites, respectively. Catalyzes the coordinated movement of the two tRNA molecules, the mRNA and conformational changes in the ribosome. This Treponema pallidum (strain Nichols) protein is Elongation factor G 2 (fusB).